Here is a 496-residue protein sequence, read N- to C-terminus: Probable malate:quinone oxidoreductase (496 aa).

This sequence belongs to the MQO family. It depends on FAD as a cofactor.

The enzyme catalyses (S)-malate + a quinone = a quinol + oxaloacetate. It functions in the pathway carbohydrate metabolism; tricarboxylic acid cycle; oxaloacetate from (S)-malate (quinone route): step 1/1. The polypeptide is Probable malate:quinone oxidoreductase (Prochlorococcus marinus (strain MIT 9313)).